A 251-amino-acid chain; its full sequence is MGQKINPNGLRLGIIRTWDSQWFVQDKEIPALIKEDYLIRELINNFSKKSAISQIEIQRLKEKTKNRIKIYIHTAKPGVIIGRDGDTRNKMVAKLKELTQKDVDLNILEVKNSEKIALLIAQNIAEQLENRMNFRHVQKMAIQKALKAGVKGIKTLVSGRLNGAEIARSEGNDEGRVPLHTLRADIDYASLQAYTTYGVLGVKVWIFHGEVLPGQTILDTRKPFVFTNNRNSKYPSRYFKGGPKNVNTKKN.

Positions 39–111 constitute a KH type-2 domain; that stretch reads IRELINNFSK…DVDLNILEVK (73 aa).

The protein belongs to the universal ribosomal protein uS3 family. Part of the 30S ribosomal subunit. Forms a tight complex with proteins S10 and S14.

Functionally, binds the lower part of the 30S subunit head. Binds mRNA in the 70S ribosome, positioning it for translation. This Phytoplasma sp. (strain STRAWB1) protein is Small ribosomal subunit protein uS3.